We begin with the raw amino-acid sequence, 120 residues long: Large ribosomal subunit protein uL18 (120 aa).

This sequence belongs to the universal ribosomal protein uL18 family. In terms of assembly, part of the 50S ribosomal subunit; part of the 5S rRNA/L5/L18/L25 subcomplex. Contacts the 5S and 23S rRNAs.

This is one of the proteins that bind and probably mediate the attachment of the 5S RNA into the large ribosomal subunit, where it forms part of the central protuberance. The sequence is that of Large ribosomal subunit protein uL18 from Synechococcus elongatus (strain ATCC 33912 / PCC 7942 / FACHB-805) (Anacystis nidulans R2).